Reading from the N-terminus, the 309-residue chain is Calcium homeostasis modulator protein 5 (309 aa).

Residues 1 to 15 (MDAFQSILKFFLNQK) are Cytoplasmic-facing. A helical membrane pass occupies residues 16-37 (TAIGYSFMALLTVGSERLFSLV). A 1,2-diacyl-sn-glycero-3-phosphate is bound by residues arginine 32 and valine 37. Topologically, residues 38–45 (AFKCPCSI) are extracellular. Disulfide bonds link cysteine 41-cysteine 127, cysteine 43-cysteine 158, and cysteine 142-cysteine 149. The helical transmembrane segment at 46-70 (ENTAYGLVFLFAPAWVLLILGFFLN) threads the bilayer. At 71 to 99 (NKAWRLFTGCCMNPQKIFPRRRCCRFFYV) the chain is on the cytoplasmic side. The chain crosses the membrane as a helical span at residues 100–129 (LGHITLSSLVAPVMWLSVALLNGTFYECAM). Asparagine 121 is an a 1,2-diacyl-sn-glycero-3-phosphate binding site. Over 130-174 (SGTRSTRLLEMICKGKPKECWEELHKVSCGKSSMAAMDSEEVRLS) the chain is Extracellular. Residues 175–200 (LQAQSQILGWCLICSASFFSLLTTCY) form a helical membrane-spanning segment. Over 201-309 (ARCRSKVSYL…MILVGTAQSL (109 aa)) the chain is Cytoplasmic. Arginine 202 lines the a 1,2-diacyl-sn-glycero-3-phosphate pocket.

Belongs to the CALHM family. In terms of assembly, oligomerizes to form undecameric cone-shaped channels.

It is found in the membrane. Its function is as follows. May assemble to form large pore channels with gating and ion conductance likely regulated by membrane lipids. The protein is Calcium homeostasis modulator protein 5 of Rattus norvegicus (Rat).